Reading from the N-terminus, the 384-residue chain is 8-amino-7-oxononanoate synthase (384 aa).

Arginine 21 is a binding site for substrate. Pyridoxal 5'-phosphate is bound at residue 108 to 109 (GF). Histidine 133 contributes to the substrate binding site. Residues serine 179, histidine 207, and threonine 233 each contribute to the pyridoxal 5'-phosphate site. Position 236 is an N6-(pyridoxal phosphate)lysine (lysine 236). Threonine 352 contacts substrate.

It belongs to the class-II pyridoxal-phosphate-dependent aminotransferase family. BioF subfamily. Homodimer. It depends on pyridoxal 5'-phosphate as a cofactor.

The enzyme catalyses 6-carboxyhexanoyl-[ACP] + L-alanine + H(+) = (8S)-8-amino-7-oxononanoate + holo-[ACP] + CO2. Its pathway is cofactor biosynthesis; biotin biosynthesis. Its function is as follows. Catalyzes the decarboxylative condensation of pimeloyl-[acyl-carrier protein] and L-alanine to produce 8-amino-7-oxononanoate (AON), [acyl-carrier protein], and carbon dioxide. The polypeptide is 8-amino-7-oxononanoate synthase (Escherichia coli O6:H1 (strain CFT073 / ATCC 700928 / UPEC)).